We begin with the raw amino-acid sequence, 258 residues long: MLAIISPAKTLDFESAVKNFPVSQPHFTDYSEQLIEVCRKLSPQDLSSLMSISDKLAGLNAARFAEWTKIHNENNSRPALFAFKGDVYTGLDADSLSEDDVIFAQSHLRMLSGLYGLLKPLDLMQPYRLEMGTKLANPKGKDLYAFWGNVITQAVQQAIDAQGDNVLVNLASDEYYKSVKESQINAKIIKPVFLDNKNGKYKVISFYAKKARGLMCRYIIQHHLTEIEQLKEFDLGGYWFDSASSTETEFVFKRDINE.

Belongs to the UPF0246 family.

In Haemophilus influenzae (strain PittEE), this protein is UPF0246 protein CGSHiEE_07045.